We begin with the raw amino-acid sequence, 445 residues long: MKLFGTDGVRGKAGEFLDSFLAMRLAMAAGIYFKDKSITNNILVGKDTRRSGYMIENAIVSGLTSIGYNVIQIGPMPTPAIAFLTEDMRCDAGIMISASHNPYYDNGIKFFDAHGNKLSEDIEKKIEEIYFDDKLIQASKVDMEKIGQAKRIDDVIGRYIVSIKNSFPKDLTLKSLRVVLDVAHGAAYKVAPTVFKELGAEVIVMSDKPNGLNINENCGALHPANLAAEVKRLRADVGFAFDGDADRLVVVDEKGEVANGDSLLGVLALYLKEQGKLQSSVVATIMSNGALKEFLNKHGIELDTCNVGDKYVLEKLKVNGGNFGGEQSGHIIFSDYAKTGDGLIAALQFSALMLSKKKSASSILGQVKPYPQLLTNLKIAEKKDLDKIKGLKELKKDLENKNINTLFRYSGTENLIRLLLEAKDIKLLEKEMKNVVEFFKKALNG.

Ser99 (phosphoserine intermediate) is an active-site residue. Mg(2+) contacts are provided by Ser99, Asp242, Asp244, and Asp246. Phosphoserine is present on Ser99.

It belongs to the phosphohexose mutase family. Requires Mg(2+) as cofactor. Activated by phosphorylation.

It carries out the reaction alpha-D-glucosamine 1-phosphate = D-glucosamine 6-phosphate. Its function is as follows. Catalyzes the conversion of glucosamine-6-phosphate to glucosamine-1-phosphate. The chain is Phosphoglucosamine mutase from Campylobacter jejuni subsp. jejuni serotype O:6 (strain 81116 / NCTC 11828).